The chain runs to 319 residues: Alpha-hemolysin (319 aa).

The signal sequence occupies residues 1 to 26 (MKTRIVSSVTTTLLLGSILMNPVAGA).

The protein belongs to the aerolysin family. Self-assembles to first form a non-lytic oligomeric intermediate, and then, a mushroom-shaped homoheptamer structure of 100 Angstroms in length and up to 100 Angstroms in diameter. Interacts with human ADAM10; this interaction is required for toxin pore formation, disruption of focal adhesions, and hly-mediated cytotoxicity.

The protein resides in the secreted. Its function is as follows. Alpha-toxin binds to the membrane of eukaryotic cells (particularly red blood cells, RBC) forming pores, resulting in hemolysis, with the release of low-molecular weight molecules leading to eventual osmotic RBC lysis. Human RBCs bind much less alpha-toxin than do rabbit RBCs. Heptamer oligomerization and pore formation is required for lytic activity. This chain is Alpha-hemolysin (hly), found in Staphylococcus aureus.